Reading from the N-terminus, the 151-residue chain is Arginine repressor (151 aa).

The protein belongs to the ArgR family. Homohexamer.

The protein resides in the cytoplasm. The protein operates within amino-acid biosynthesis; L-arginine biosynthesis [regulation]. In terms of biological role, regulates arginine biosynthesis genes. This Haemophilus influenzae (strain ATCC 51907 / DSM 11121 / KW20 / Rd) protein is Arginine repressor (argR).